A 344-amino-acid chain; its full sequence is MTSNILLLLHPTVVTDQHIVENIKLKISNTHKDFHLSQTTIDRLTQGSIEFDNNSFDEIIYINPNEEQYREIPNSLMKLIFDLLKLNGKFTGDLPTDQNLDVLMNGFLIINQNEWNKPQPEETVVTLKKKSTTTNNNSNTSTIKKSFPMFKKLNNDNASTPGLTDSSAGTSEDETATVSNKRKLVESKLVYFSDDDDDDDYDGSSDGEDLINENDLIAESNKYKIIVPKKCELPNGKKRKKACKDCTCGLKELEEEEIKSQGKLQDTVLANMAQSATIEAIKIEERMKKNKIKFTEEDLSEIDFTVAGKTGGCGSCSLGDAFRCDGCPFLGLPPFKPGEVVRID.

The interval Met1–Thr160 is N-terminal SAM-like domain. Residues Asn154–Ser179 form a disordered region. The segment covering Asn155–Thr170 has biased composition (polar residues). The interval Pro161 to Tyr223 is linker. Residues Cys231, Cys243, Cys246, and Cys248 each contribute to the [2Fe-2S] cluster site. Residues Cys231–Cys248 are fe-S binding site A. Cys313, Cys316, Cys324, and Cys327 together coordinate [4Fe-4S] cluster. 2 consecutive short sequence motifs (cx2C motif) follow at residues Cys313 to Cys316 and Cys324 to Cys327. The tract at residues Cys313–Cys327 is fe-S binding site B.

The protein belongs to the anamorsin family. As to quaternary structure, monomer. Interacts with TAH18. Interacts with MIA40. Requires [2Fe-2S] cluster as cofactor. The cofactor is [4Fe-4S] cluster.

The protein localises to the cytoplasm. The protein resides in the mitochondrion intermembrane space. Its function is as follows. Component of the cytosolic iron-sulfur (Fe-S) protein assembly (CIA) machinery required for the maturation of extramitochondrial Fe-S proteins. Part of an electron transfer chain functioning in an early step of cytosolic Fe-S biogenesis, facilitating the de novo assembly of a [4Fe-4S] cluster on the scaffold complex CFD1-NBP35. Electrons are transferred to DRE2 from NADPH via the FAD- and FMN-containing protein TAH18. TAH18-DRE2 are also required for the assembly of the diferric tyrosyl radical cofactor of ribonucleotide reductase (RNR), probably by providing electrons for reduction during radical cofactor maturation in the catalytic small subunit RNR2. This chain is Fe-S cluster assembly protein DRE2, found in Candida tropicalis (strain ATCC MYA-3404 / T1) (Yeast).